Consider the following 154-residue polypeptide: 6,7-dimethyl-8-ribityllumazine synthase (154 aa).

5-amino-6-(D-ribitylamino)uracil is bound by residues Phe22, 56 to 58, and 80 to 82; these read AFE and AVI. Residue 85–86 coordinates (2S)-2-hydroxy-3-oxobutyl phosphate; it reads AT. Residue His88 is the Proton donor of the active site. A 5-amino-6-(D-ribitylamino)uracil-binding site is contributed by Phe113. Arg127 lines the (2S)-2-hydroxy-3-oxobutyl phosphate pocket.

Belongs to the DMRL synthase family. Forms an icosahedral capsid composed of 60 subunits, arranged as a dodecamer of pentamers.

It catalyses the reaction (2S)-2-hydroxy-3-oxobutyl phosphate + 5-amino-6-(D-ribitylamino)uracil = 6,7-dimethyl-8-(1-D-ribityl)lumazine + phosphate + 2 H2O + H(+). It functions in the pathway cofactor biosynthesis; riboflavin biosynthesis; riboflavin from 2-hydroxy-3-oxobutyl phosphate and 5-amino-6-(D-ribitylamino)uracil: step 1/2. Catalyzes the formation of 6,7-dimethyl-8-ribityllumazine by condensation of 5-amino-6-(D-ribitylamino)uracil with 3,4-dihydroxy-2-butanone 4-phosphate. This is the penultimate step in the biosynthesis of riboflavin. This Geobacillus kaustophilus (strain HTA426) protein is 6,7-dimethyl-8-ribityllumazine synthase.